The chain runs to 422 residues: MAM and fibronectin type III domain-containing protein 1 (422 aa).

The 75-residue stretch at 1–75 folds into the MAM domain; sequence KFYYHMYGAT…VSLMEGICAG (75 aa). Fibronectin type-III domains follow at residues 2–74, 196–286, and 291–386; these read FYYH…GICA, PGWN…QART, and PSRA…YIVT.

In terms of tissue distribution, component of the acid-insoluble and acid-soluble organic matrix of the aragonitic skeleton (at protein level).

The protein localises to the secreted. In Acropora millepora (Staghorn coral), this protein is MAM and fibronectin type III domain-containing protein 1.